Reading from the N-terminus, the 172-residue chain is T-cell receptor gamma chain C region C7.5 (172 aa).

The c region stretch occupies residues 1-140 (DKKLDADISP…QFTITSAYYT (140 aa)). Residues 141–160 (YLLLLLKSVIYLAIISFSLL) traverse the membrane as a helical segment. Residues 161-172 (RRTSVCCNEKKS) are Cytoplasmic-facing.

The protein localises to the membrane. This Mus musculus (Mouse) protein is T-cell receptor gamma chain C region C7.5.